The following is a 307-amino-acid chain: Chaperone protein DnaJ 2 (307 aa).

The region spanning 6–71 (NYYQILGVPR…TKRRELDSRL (66 aa)) is the J domain. Residues 69-133 (SRLFGRFRRP…TRRTKVVSPA (65 aa)) form a disordered region. Polar residues predominate over residues 88–99 (NGGRSPNGTSVN). The span at 100–114 (GQVRTPTGRTGTRQP) shows a compositional bias: low complexity.

It belongs to the DnaJ family. As to quaternary structure, homodimer. Zn(2+) serves as cofactor.

Its subcellular location is the cytoplasm. Functionally, participates actively in the response to hyperosmotic and heat shock by preventing the aggregation of stress-denatured proteins and by disaggregating proteins, also in an autonomous, DnaK-independent fashion. Unfolded proteins bind initially to DnaJ; upon interaction with the DnaJ-bound protein, DnaK hydrolyzes its bound ATP, resulting in the formation of a stable complex. GrpE releases ADP from DnaK; ATP binding to DnaK triggers the release of the substrate protein, thus completing the reaction cycle. Several rounds of ATP-dependent interactions between DnaJ, DnaK and GrpE are required for fully efficient folding. Also involved, together with DnaK and GrpE, in the DNA replication of plasmids through activation of initiation proteins. In Synechocystis sp. (strain ATCC 27184 / PCC 6803 / Kazusa), this protein is Chaperone protein DnaJ 2 (dnaJ2).